A 999-amino-acid polypeptide reads, in one-letter code: Helicase required for RNAi-mediated heterochromatin assembly 1 (999 aa).

A disordered region spans residues 61–90 (EQIETSETSKTQDSEGNKVDKNLKENKSIR). Residues 70-88 (KTQDSEGNKVDKNLKENKS) show a composition bias toward basic and acidic residues. Ser-94 carries the post-translational modification Phosphoserine. Over residues 106–124 (RNDITSGKNREFENEHHPA) the composition is skewed to basic and acidic residues. The segment at 106–131 (RNDITSGKNREFENEHHPASDTSSWR) is disordered. 393-400 (GPPGTGKS) lines the ATP pocket.

As to quaternary structure, cid12, hrr1 and rdp1 interact forming the RNA-directed RNA polymerase complex (RDRC). The RDRC complex interacts with the RITS complex via interaction between ago1 and hrr1. Clr4 has a role in mediating this interaction.

It is found in the cytoplasm. Its subcellular location is the nucleus. The enzyme catalyses ATP + H2O = ADP + phosphate + H(+). Functionally, has a role in the RNA interference (RNAi) pathway which is important for heterochromatin formation and accurate chromosome segregation. A member of the RNA-directed RNA polymerase complex (RDRC) which is involved in the generation of small interfering RNAs (siRNAs) and mediate their association with the RNA-induced transcriptional silencing (RITS) complex. RITS acts as a priming complex for dsRNA synthesis at the site of non-coding centromeric RNA. The protein is Helicase required for RNAi-mediated heterochromatin assembly 1 (hrr1) of Schizosaccharomyces pombe (strain 972 / ATCC 24843) (Fission yeast).